The sequence spans 342 residues: 3-isopropylmalate dehydrogenase (342 aa).

Positions 87, 97, 121, and 212 each coordinate substrate. The Mg(2+) site is built by Asp-212, Asp-236, and Asp-240. NAD(+) is bound at residue 272-284 (GSAPDIAGRQLAD). Residues 319-328 (RAAAGAAQPS) show a composition bias toward low complexity. The interval 319 to 342 (RAAAGAAQPSTRERGEDLAARAAG) is disordered. Residues 329–342 (TRERGEDLAARAAG) are compositionally biased toward basic and acidic residues.

It belongs to the isocitrate and isopropylmalate dehydrogenases family. LeuB type 2 subfamily. Homodimer. Mg(2+) serves as cofactor. Mn(2+) is required as a cofactor.

It is found in the cytoplasm. It carries out the reaction (2R,3S)-3-isopropylmalate + NAD(+) = 4-methyl-2-oxopentanoate + CO2 + NADH. Its pathway is amino-acid biosynthesis; L-leucine biosynthesis; L-leucine from 3-methyl-2-oxobutanoate: step 3/4. Catalyzes the oxidation of 3-carboxy-2-hydroxy-4-methylpentanoate (3-isopropylmalate) to 3-carboxy-4-methyl-2-oxopentanoate. The product decarboxylates to 4-methyl-2 oxopentanoate. This chain is 3-isopropylmalate dehydrogenase, found in Frankia casuarinae (strain DSM 45818 / CECT 9043 / HFP020203 / CcI3).